A 153-amino-acid polypeptide reads, in one-letter code: Interleukin-4 (153 aa).

An N-terminal signal peptide occupies residues 1–24; it reads MGLTSQLLPPLFFLLACAGNFVHG. Disulfide bonds link cysteine 27–cysteine 151, cysteine 48–cysteine 89, and cysteine 70–cysteine 123. A glycan (N-linked (GlcNAc...) asparagine) is linked at asparagine 62.

Belongs to the IL-4/IL-13 family.

The protein localises to the secreted. Functionally, participates in at least several B-cell activation processes as well as of other cell types. It is a costimulator of DNA-synthesis. It induces the expression of class II MHC molecules on resting B-cells. It enhances both secretion and cell surface expression of IgE and IgG1. It also regulates the expression of the low affinity Fc receptor for IgE (CD23) on both lymphocytes and monocytes. Positively regulates IL31RA expression in macrophages. Stimulates autophagy in dendritic cells by interfering with mTORC1 signaling and through the induction of RUFY4. The protein is Interleukin-4 (IL4) of Macaca fascicularis (Crab-eating macaque).